The sequence spans 198 residues: Small ribosomal subunit protein uS5 (198 aa).

In terms of domain architecture, S5 DRBM spans 46–109 (LEDDVLEISM…NNAKLNIFKV (64 aa)).

It belongs to the universal ribosomal protein uS5 family. In terms of assembly, part of the 30S ribosomal subunit. Contacts protein S4.

Functionally, with S4 and S12 plays an important role in translational accuracy. In Archaeoglobus fulgidus (strain ATCC 49558 / DSM 4304 / JCM 9628 / NBRC 100126 / VC-16), this protein is Small ribosomal subunit protein uS5.